Consider the following 149-residue polypeptide: Transcription antitermination protein NusB (149 aa).

The protein belongs to the NusB family.

In terms of biological role, involved in transcription antitermination. Required for transcription of ribosomal RNA (rRNA) genes. Binds specifically to the boxA antiterminator sequence of the ribosomal RNA (rrn) operons. In Acinetobacter baylyi (strain ATCC 33305 / BD413 / ADP1), this protein is Transcription antitermination protein NusB.